The primary structure comprises 865 residues: General transcription factor 3C polypeptide 5 (865 aa).

Disordered regions lie at residues 1–21 (MNDE…NNNS), 111–163 (RPNK…NEKF), 191–215 (NNNT…TVPI), 391–522 (QDNH…NKEG), and 669–865 (DNKM…EESE). Composition is skewed to low complexity over residues 7 to 21 (KNNS…NNNS), 115 to 126 (QQTQTQTQTQTQ), 140 to 158 (QSPK…QQPQ), 199 to 210 (DNVNDSSSSSSS), and 401 to 411 (SKNNNNNNNNK). 2 stretches are compositionally biased toward basic and acidic residues: residues 412-439 (DSIK…KQEE) and 448-489 (NNEK…KGDD). Composition is skewed to low complexity over residues 508-521 (EGNN…NNKE) and 677-696 (RSNT…PKST). 3 stretches are compositionally biased toward basic and acidic residues: residues 697-713 (QPKE…EPRP), 757-766 (QNKEIDESLK), and 773-786 (MEKD…KNEE). Composition is skewed to acidic residues over residues 800 to 820 (DYDD…DFDG) and 839 to 865 (EDSE…EESE).

It belongs to the TFIIIC subunit 5 family. As to quaternary structure, part of the TFIIIC complex.

Its subcellular location is the nucleus. Involved in RNA polymerase III-mediated transcription. Integral, tightly associated component of the DNA-binding TFIIIC2 subcomplex that directly binds tRNA and virus-associated RNA promoters. This chain is General transcription factor 3C polypeptide 5 (gtf3c5), found in Dictyostelium discoideum (Social amoeba).